A 596-amino-acid polypeptide reads, in one-letter code: DNA mismatch repair protein MutL (596 aa).

It belongs to the DNA mismatch repair MutL/HexB family.

In terms of biological role, this protein is involved in the repair of mismatches in DNA. It is required for dam-dependent methyl-directed DNA mismatch repair. May act as a 'molecular matchmaker', a protein that promotes the formation of a stable complex between two or more DNA-binding proteins in an ATP-dependent manner without itself being part of a final effector complex. The sequence is that of DNA mismatch repair protein MutL from Leptospira borgpetersenii serovar Hardjo-bovis (strain JB197).